Here is a 409-residue protein sequence, read N- to C-terminus: FAD-dependent monooxygenase phnB (409 aa).

FAD contacts are provided by Glu35, Ala50, Arg110, and Asp311.

This sequence belongs to the paxM FAD-dependent monooxygenase family. Requires FAD as cofactor.

It carries out the reaction 3,6,7,9-tetrahydroxy-3-methyl-2,3-dihydro-1H-naphtho[2,1-b]pyran-1-one + NADPH + O2 + H(+) = 2,3,4,7,9-pentahydroxy-6-methyl-1H-phenalen-1-one + NADP(+) + 2 H2O. It functions in the pathway secondary metabolite biosynthesis. Functionally, FAD-dependent monooxygenase; part of the gene cluster that mediates the biosynthesis of phenalenones such as herqueinone, compounds that have been reported to treat tumors, bacterial infections and/or mycoses, and rheumatic diseases. The non-reducing polyketide synthase phnA synthesizes the heptaketide backbone and cyclizes it into the angular, hemiketal-containing naphtho-gamma-pyrone prephenalenone. The product template (PT) domain of phnA catalyzes only the C4-C9 aldol condensation, which is unprecedented among known PT domains. The transformation of prephenalenone to phenalenones requires an FAD-dependent monooxygenase phnB, which catalyzes the C2 aromatic hydroxylation of prephenalenone and ring opening of the gamma-pyrone ring simultaneously. Subsequent intramolecular deprotonation of C3 phenolic oxygen accelerates phenalenone ring closure to yield the tricyclic phenalenone core with a C2 hydroxylation. The prenyltransferase phnF further catalyzes reverse C-prenylation of phenalenone by direct electrophilic substitution at C6, or possibly via first a forward O-prenylation of a neighboring phenol in phenalenone, followed by a Claisen rearrangement. The hydroalkoxylation enzyme phnH catalyzes the 5-exo-trig cyclization via acid catalysis after the spontaneous deprotonation of 7-OH, which leads to the formation of the dihydrobenzofuran atrovenetin. Atrovenetin is further converted to deoxyherqueinone by the O-methyltransferase phnC which can methylate C2-OH to stabilize the northern portion of the phenalenone core. Finally, the oxidoreductase phnG converts deoxyherqueinone to herqueinone via C6 hydroxylation. The protein is FAD-dependent monooxygenase phnB of Penicillium herquei.